Consider the following 1491-residue polypeptide: Copper-transporting ATPase 1 (1491 aa).

Over 1 to 644 the chain is Cytoplasmic; the sequence is MEPSVDANSI…KREIKQWRGS (644 aa). HMA domains follow at residues 8-74 and 85-151; these read NSIT…FDAL and TNTV…LDMG. The Cu(+) site is built by Thr18, Cys19, and Cys22. Position 152 is a phosphothreonine (Thr152). Residues 171 to 237 form the HMA 3 domain; that stretch reads VMLKMKVEGM…QIEAVGFPAF (67 aa). 2 residues coordinate Cu(+): Cys182 and Cys185. A Phosphoserine modification is found at Ser270. One can recognise an HMA 4 domain in the interval 277–343; sequence STTMFTIEGM…AIEAISPGQY (67 aa). The Cu(+) site is built by Cys288 and Cys291. Residue Thr327 is modified to Phosphothreonine. Ser339, Ser353, Ser357, and Ser362 each carry phosphoserine. HMA domains lie at 377 to 443, 479 to 545, and 555 to 621; these read QEAV…FDAA, NKCY…FGAM, and GILE…FEAS. Cu(+)-binding residues include Cys388, Cys391, Cys490, Cys493, Cys566, and Cys569. The helical transmembrane segment at 645–666 threads the bilayer; it reads FLVSLFFCIPVMGLMVYMMVMD. Residues 667–705 are Extracellular-facing; sequence HHLATLHHNQNMSNEEMINMHSAMFLERQILPGLSIMNL. A glycan (N-linked (GlcNAc...) asparagine) is linked at Asn677. A helical transmembrane segment spans residues 706-725; sequence LSLLLCLPVQFCGGWYFYIQ. The Cytoplasmic portion of the chain corresponds to 726-732; it reads AYKALKH. Residues 733–753 form a helical membrane-spanning segment; it reads KTANMDVLIVLATTIAFAYSL. Residues 754–772 are Extracellular-facing; sequence VILLVAMFERAKVNPITFF. A helical transmembrane segment spans residues 773–793; it reads DTPPMLFVFIALGRWLEHIAK. Over 794–926 the chain is Cytoplasmic; sequence GKTSEALAKL…SKAPIQQFAD (133 aa). Residues 927–950 traverse the membrane as a helical segment; the sequence is KLSGYFVPFIVLVSIVTLLVWIII. Topologically, residues 951–980 are extracellular; the sequence is GFQNFEIVETYFPGYNRSISRTETIIRFAF. N-linked (GlcNAc...) asparagine glycosylation is present at Asn966. The chain crosses the membrane as a helical span at residues 981–1002; sequence QASITVLCIACPCSLGLATPTA. Topologically, residues 1003-1347 are cytoplasmic; sequence VMVGTGVGAQ…LSRKTVKRIR (345 aa). The active-site 4-aspartylphosphate intermediate is the Asp1035. Residue Glu1072 coordinates ATP. At Thr1203 the chain carries Phosphothreonine. Residues Asp1292 and Asp1296 each contribute to the Mg(2+) site. A helical transmembrane segment spans residues 1348–1365; sequence INFVFALIYNLVGIPIAA. The Extracellular portion of the chain corresponds to 1366 to 1376; it reads GVFLPIGLVLQ. A helical transmembrane segment spans residues 1377-1396; that stretch reads PWMGSAAMAASSVSVVLSSL. The Cytoplasmic segment spans residues 1397–1491; that stretch reads FLKLYRKPTY…DFREDDDTTL (95 aa). A phosphoserine mark is found at Ser1421, Ser1423, Ser1451, Ser1454, and Ser1457. The Endocytosis signal signature appears at 1458–1459; it reads LL. Phosphoserine occurs at positions 1460, 1464, 1467, and 1477. The segment at 1477–1491 is PDZD11-binding; sequence SLLVGDFREDDDTTL. Residues 1478–1479 carry the Endocytosis signal motif; sequence LL.

Belongs to the cation transport ATPase (P-type) (TC 3.A.3) family. Type IB subfamily. As to quaternary structure, monomer. Interacts with PDZD11. Interacts with ATOX1 and COMMD1. Interacts with TYRP1. Directly interacts with SOD3; this interaction is copper-dependent and is required for SOD3 activity. In terms of tissue distribution, widely expressed. Highly expressed in pituitary endocrine cells. Expressed in melanocytes (at protein level). Expressed in motor neuron (at protein level). Expressed in hippocampal neuron (at protein level). In the kidney, it is detected in the proximal and distal tubules (at protein level). Expressed in aorta (at protein level).

The protein localises to the golgi apparatus. The protein resides in the trans-Golgi network membrane. It localises to the cell membrane. Its subcellular location is the melanosome membrane. It is found in the early endosome membrane. The protein localises to the cell projection. The protein resides in the axon. It localises to the dendrite. Its subcellular location is the postsynaptic density. It carries out the reaction Cu(+)(in) + ATP + H2O = Cu(+)(out) + ADP + phosphate + H(+). Functionally, ATP-driven copper (Cu(+)) ion pump that plays an important role in intracellular copper ion homeostasis. Within a catalytic cycle, acquires Cu(+) ion from donor protein on the cytoplasmic side of the membrane and delivers it to acceptor protein on the lumenal side. The transfer of Cu(+) ion across the membrane is coupled to ATP hydrolysis and is associated with a transient phosphorylation that shifts the pump conformation from inward-facing to outward-facing state. Under physiological conditions, at low cytosolic copper concentration, it is localized at the trans-Golgi network (TGN) where it transfers Cu(+) ions to cuproenzymes of the secretory pathway. Upon elevated cytosolic copper concentrations, it relocalizes to the plasma membrane where it is responsible for the export of excess Cu(+) ions. May play a dual role in neuron function and survival by regulating cooper efflux and neuronal transmission at the synapse as well as by supplying Cu(+) ions to enzymes such as PAM, TYR and SOD3. In the melanosomes of pigmented cells, provides copper cofactor to TYR to form an active TYR holoenzyme for melanin biosynthesis. This is Copper-transporting ATPase 1 from Mus musculus (Mouse).